The primary structure comprises 99 residues: Transmembrane protein 14A (99 aa).

The next 3 membrane-spanning stretches (helical) occupy residues 1-21, 24-44, and 79-99; these read MDLI…LGYK, GGVL…YGAY, and PAGL…LLLL.

It belongs to the TMEM14 family.

Its subcellular location is the mitochondrion membrane. It is found in the endoplasmic reticulum membrane. Inhibits apoptosis via negative regulation of the mitochondrial outer membrane permeabilization involved in apoptotic signaling pathway. This is Transmembrane protein 14A (TMEM14A) from Bos taurus (Bovine).